The sequence spans 1561 residues: ABC-type transporter phomO' (1561 aa).

Helical transmembrane passes span 34 to 54, 110 to 130, 139 to 159, 172 to 192, 202 to 222, 314 to 334, and 358 to 378; these read LYFEEVVFVLVPSCVFILLAA, CTAGLLVTLHVAGLILLCTTV, SVPASVVAALAFGVVPVLAHF, SSSLLVGLFLCVAVLLRAPLV, GSALVAVEIASLVLQLVLIAV, LGLYALAPVIPRLCLAGFTLA, and GLIGATFLIYTGIAVSTGWYW. The ABC transmembrane type-1 1 domain occupies 326-599; the sequence is LCLAGFTLAQ…LLQIIPSFGA (274 aa). Residue N384 is glycosylated (N-linked (GlcNAc...) asparagine). Transmembrane regions (helical) follow at residues 428-448, 452-472, 535-555, and 577-597; these read LAYAHELWVAPIETAIGTWML, VGPPGLVVLGIIGVCLGTSTY, LIVGTLLSSYSTATLAPVLVF, and LIWISLLASPLIQLLQIIPSF. The ABC transporter 1 domain maps to 645 to 871; it reads IHNSSFSYTD…VEDENGDVDN (227 aa). Residue N647 is glycosylated (N-linked (GlcNAc...) asparagine). Residue 678–685 coordinates ATP; it reads GPAGCGKS. N721 is a glycosylation site (N-linked (GlcNAc...) asparagine). A disordered region spans residues 853–899; it reads YQFPPSQADVEDENGDVDNGAENTRPRESSHTTEAQSGPPEPKSKPT. A run of 4 helical transmembrane segments spans residues 913-933, 969-989, 1037-1054, and 1147-1167; these read SIGFLNLVLFIGGGIIFAFCL, VLPLIAVAGWVAQLMMLIVPL, LFNTAAALLTGIAQVILI, and LVLNLVVAGLALVVMGAAVGL. In terms of domain architecture, ABC transmembrane type-1 2 spans 920–1209; it reads VLFIGGGIIF…LLTAWTSLET (290 aa). N-linked (GlcNAc...) asparagine glycosylation occurs at N1189. Positions 1229–1238 are enriched in basic and acidic residues; it reads DVLVRPDSLD. Residues 1229–1298 are disordered; the sequence is DVLVRPDSLD…DVAADGEKHE (70 aa). Over residues 1269-1280 the composition is skewed to acidic residues; that stretch reads YDDDDESDENTD. One can recognise an ABC transporter 2 domain in the interval 1297-1545; sequence HEATTITTTS…SDIFAFFGRS (249 aa). ATP is bound at residue 1333–1340; the sequence is GRTGSGKS. N-linked (GlcNAc...) asparagine glycosylation occurs at N1496.

It belongs to the ABC transporter superfamily. ABCC family. Conjugate transporter (TC 3.A.1.208) subfamily.

Its subcellular location is the membrane. In terms of biological role, ABC-type transporter; part of the gene cluster that mediates the biosynthesis of the phomopsins, a group of hexapeptide mycotoxins which infects lupins and causes lupinosis disease in livestock. In Diaporthe leptostromiformis (Lupinosis disease fungus), this protein is ABC-type transporter phomO'.